The following is a 469-amino-acid chain: 3-isopropylmalate dehydratase large subunit (469 aa).

[4Fe-4S] cluster contacts are provided by C350, C410, and C413.

This sequence belongs to the aconitase/IPM isomerase family. LeuC type 1 subfamily. Heterodimer of LeuC and LeuD. [4Fe-4S] cluster serves as cofactor.

The enzyme catalyses (2R,3S)-3-isopropylmalate = (2S)-2-isopropylmalate. The protein operates within amino-acid biosynthesis; L-leucine biosynthesis; L-leucine from 3-methyl-2-oxobutanoate: step 2/4. Catalyzes the isomerization between 2-isopropylmalate and 3-isopropylmalate, via the formation of 2-isopropylmaleate. The sequence is that of 3-isopropylmalate dehydratase large subunit from Rhizobium etli (strain ATCC 51251 / DSM 11541 / JCM 21823 / NBRC 15573 / CFN 42).